Reading from the N-terminus, the 436-residue chain is Tubulin epsilon and delta complex protein 2 (436 aa).

2 disordered regions span residues 53–76 (ARTP…PSSQ) and 94–191 (VRKG…PSSA). Residues 111 to 131 (TSKAATSGAAAASHPRAPSRG) are compositionally biased toward low complexity. Residues 153–170 (DYPEHRLRSKGDKTHVRT) show a composition bias toward basic and acidic residues. Phosphoserine is present on Ser161.

Interacts with TEDC1. Found in a complex with TEDC1, TEDC2, TUBE1 and TUBD1.

Its subcellular location is the cell projection. It is found in the cilium. The protein localises to the cytoplasm. It localises to the cytoskeleton. The protein resides in the microtubule organizing center. Its subcellular location is the centrosome. It is found in the centriole. Its function is as follows. Acts as a positive regulator of ciliary hedgehog signaling. Required for centriole stability. The sequence is that of Tubulin epsilon and delta complex protein 2 from Mus musculus (Mouse).